Reading from the N-terminus, the 324-residue chain is tRNA uridine(34) hydroxylase (324 aa).

In terms of domain architecture, Rhodanese spans 122-218 (QENRCLILDV…YGQQVGTGKW (97 aa)). The active-site Cysteine persulfide intermediate is Cys178.

The protein belongs to the TrhO family.

The enzyme catalyses uridine(34) in tRNA + AH2 + O2 = 5-hydroxyuridine(34) in tRNA + A + H2O. Functionally, catalyzes oxygen-dependent 5-hydroxyuridine (ho5U) modification at position 34 in tRNAs. The polypeptide is tRNA uridine(34) hydroxylase (Chlamydia pneumoniae (Chlamydophila pneumoniae)).